A 158-amino-acid chain; its full sequence is Transcriptional repressor NrdR (158 aa).

A zinc finger lies at 3-34 (CPSCQNTDSRVLESRAAEGGRSVRRRRECLNC). Positions 49–139 (ITVIKRNGHR…VYRHFRSVSD (91 aa)) constitute an ATP-cone domain.

The protein belongs to the NrdR family. It depends on Zn(2+) as a cofactor.

Functionally, negatively regulates transcription of bacterial ribonucleotide reductase nrd genes and operons by binding to NrdR-boxes. This is Transcriptional repressor NrdR from Synechococcus sp. (strain CC9311).